The following is a 464-amino-acid chain: MSTAALVEGKIVQCIGAVIDVEFPRDSMPKIYDALILDGSELTLEVQQQLGDGVVRTICLGASDGLRRGLTVKNTAKPISVPVGKPTLGRIMDVLGRPIDEAGPIESDVTRSIHQKAPAFDELSPSTELLETGIKVIDLICPFAKGGKVGLFGGAGVGKTVNMMELINNIAKEHGGYSVFAGVGERTREGNDFYHEMKDSNVLDKVALVYGQMNEPPGNRLRVALTGLTMAEHFRDEGLDVLFFVDNIYRFTLAGTEVSALLGRMPSAVGYQPTLAEEMGKLQERITSTKKGSITSVQAVYVPADDLTDPSPATTFGHLDATVVLSRDIASLGIYPAVDPLDSTSRQIDPNVIGEEHYSITRRVQQTLQRYKELRDIIAILGMDELSPEDKLSVARARKIQRFLSQPFHVAEVFTGSPGKYVPLKETIRGFKMIVDGECDHLPEQAFYMVGTIDEAFEKAKKIQ.

G153–T160 lines the ATP pocket.

This sequence belongs to the ATPase alpha/beta chains family. As to quaternary structure, F-type ATPases have 2 components, CF(1) - the catalytic core - and CF(0) - the membrane proton channel. CF(1) has five subunits: alpha(3), beta(3), gamma(1), delta(1), epsilon(1). CF(0) has three main subunits: a(1), b(2) and c(9-12). The alpha and beta chains form an alternating ring which encloses part of the gamma chain. CF(1) is attached to CF(0) by a central stalk formed by the gamma and epsilon chains, while a peripheral stalk is formed by the delta and b chains.

The protein localises to the cell inner membrane. The enzyme catalyses ATP + H2O + 4 H(+)(in) = ADP + phosphate + 5 H(+)(out). Produces ATP from ADP in the presence of a proton gradient across the membrane. The catalytic sites are hosted primarily by the beta subunits. In Burkholderia orbicola (strain MC0-3), this protein is ATP synthase subunit beta.